We begin with the raw amino-acid sequence, 252 residues long: 5'-nucleotidase SurE (252 aa).

Positions 8, 9, 39, and 95 each coordinate a divalent metal cation.

This sequence belongs to the SurE nucleotidase family. A divalent metal cation is required as a cofactor.

Its subcellular location is the cytoplasm. The enzyme catalyses a ribonucleoside 5'-phosphate + H2O = a ribonucleoside + phosphate. In terms of biological role, nucleotidase that shows phosphatase activity on nucleoside 5'-monophosphates. This chain is 5'-nucleotidase SurE, found in Clostridium botulinum (strain ATCC 19397 / Type A).